A 171-amino-acid chain; its full sequence is ATP synthase subunit b (171 aa).

Residues 2-22 traverse the membrane as a helical segment; the sequence is FVVKMVLGFLILLSPLCATGL.

It belongs to the ATPase B chain family. In terms of assembly, F-type ATPases have 2 components, F(1) - the catalytic core - and F(0) - the membrane proton channel. F(1) has five subunits: alpha(3), beta(3), gamma(1), delta(1), epsilon(1). F(0) has three main subunits: a(1), b(2) and c(10-14). The alpha and beta chains form an alternating ring which encloses part of the gamma chain. F(1) is attached to F(0) by a central stalk formed by the gamma and epsilon chains, while a peripheral stalk is formed by the delta and b chains.

It is found in the cell inner membrane. F(1)F(0) ATP synthase produces ATP from ADP in the presence of a proton or sodium gradient. F-type ATPases consist of two structural domains, F(1) containing the extramembraneous catalytic core and F(0) containing the membrane proton channel, linked together by a central stalk and a peripheral stalk. During catalysis, ATP synthesis in the catalytic domain of F(1) is coupled via a rotary mechanism of the central stalk subunits to proton translocation. Its function is as follows. Component of the F(0) channel, it forms part of the peripheral stalk, linking F(1) to F(0). The sequence is that of ATP synthase subunit b from Helicobacter pylori (strain ATCC 700392 / 26695) (Campylobacter pylori).